A 482-amino-acid polypeptide reads, in one-letter code: Uric acid transporter UacT (482 aa).

The Cytoplasmic portion of the chain corresponds to 1 to 29 (MSAIDSQLPSSSGQDRPTDEVDRILSPGK). Residues 30 to 50 (LIILGLQHVLVMYAGAVAVPL) form a helical membrane-spanning segment. The Periplasmic segment spans residues 51-62 (MIGDRLGLSKEA). The helical transmembrane segment at 63-83 (IAMLISSDLFCCGIVTLLQCI) threads the bilayer. Topologically, residues 84–92 (GIGRFMGIR) are cytoplasmic. The chain crosses the membrane as a helical span at residues 93–113 (LPVIMSVTFAAVTPMIAIGMN). The Periplasmic segment spans residues 114–115 (PD). The helical transmembrane segment at 116–136 (IGLLGIFGATIAAGFITTLLA) threads the bilayer. Topologically, residues 137-142 (PLIGRL) are cytoplasmic. The helical transmembrane segment at 143–163 (MPLFPPLVTGVVITSIGLSII) threads the bilayer. The Periplasmic portion of the chain corresponds to 164 to 178 (QVGIDWAAGGKGNPQ). The helical transmembrane segment at 179–199 (YGNPVYLGISFAVLIFILLIT) threads the bilayer. At 200–204 (RYAKG) the chain is on the cytoplasmic side. A helical membrane pass occupies residues 205-225 (FMSNVAVLLGIVFGFLLSWMM). The Periplasmic portion of the chain corresponds to 226–261 (NEVNLSGLHDASWFAIVTPMSFGMPIFDPVSILTMT). The helical transmembrane segment at 262-282 (AVLIIVFIESMGMFLALGEIV) threads the bilayer. At 283–337 (GRKLSSHDIIRGLRVDGVGTMIGGTFNSFPHTSFSQNVGLVSVTRVHSRWVCISS) the chain is on the cytoplasmic side. Residues 338 to 358 (GIILILFGMVPKMAVLVASIP) traverse the membrane as a helical segment. Gln-359 is a topological domain (periplasmic). The helical transmembrane segment at 360–380 (FVLGGAGLVMFGMVLATGIRI) threads the bilayer. Residues 381 to 392 (LSRCNYTTNRYN) lie on the Cytoplasmic side of the membrane. Residues 393-413 (LYIVAISLGVGMTPTLSHDFF) form a helical membrane-spanning segment. The Periplasmic segment spans residues 414-421 (SKLPAVLQ). Residues 422 to 442 (PLLHSGIMLATLSAVVLNVFF) form a helical membrane-spanning segment. The Cytoplasmic portion of the chain corresponds to 443–482 (NGYQHHADLVKESVSDKDLKVRTVRMWLLMRKLKKNEHGE).

It belongs to the nucleobase:cation symporter-2 (NCS2) (TC 2.A.40) family.

The protein localises to the cell inner membrane. Inhibited in the presence of the protonophore carbonyl cyanide m-chlorophenyl hydrazone. Its function is as follows. Proton-dependent high-capacity transporter for uric acid. Also shows a low capacity for transport of xanthine at 37 degrees Celsius but not at 25 degrees Celsius. In Escherichia coli (strain K12), this protein is Uric acid transporter UacT (uacT).